Reading from the N-terminus, the 174-residue chain is Small ribosomal subunit protein uS5 (174 aa).

The S5 DRBM domain maps to 19 to 82 (LREKMVAINR…DEARRKMVKV (64 aa)).

It belongs to the universal ribosomal protein uS5 family. In terms of assembly, part of the 30S ribosomal subunit. Contacts proteins S4 and S8.

Its function is as follows. With S4 and S12 plays an important role in translational accuracy. Functionally, located at the back of the 30S subunit body where it stabilizes the conformation of the head with respect to the body. The chain is Small ribosomal subunit protein uS5 from Azoarcus sp. (strain BH72).